The chain runs to 976 residues: Peptidylglycine alpha-amidating monooxygenase (976 aa).

The N-terminal stretch at Met-1–Ala-25 is a signal peptide. The peptidylglycine alpha-hydroxylating monooxygenase stretch occupies residues Met-1–Gly-497. The propeptide occupies Phe-26–Arg-35. Residues Phe-36–Gly-866 are Intragranular-facing. Cystine bridges form between Cys-47/Cys-186, Cys-81/Cys-126, Cys-114/Cys-131, Cys-227/Cys-334, and Cys-293/Cys-315. Cu(2+) contacts are provided by His-107 and His-108. His-172, His-242, His-244, and Met-314 together coordinate Cu(2+). The segment at Asp-498–Val-820 is peptidyl-alpha-hydroxyglycine alpha-amidating lyase. NHL repeat units follow at residues Val-501 to Asp-544, Ala-570 to His-611, Leu-620 to Ser-665, and Gly-673 to Asp-717. Val-520 serves as a coordination point for Ca(2+). Arg-533 contacts a protein. Residue His-585 participates in Zn(2+) binding. Ca(2+) is bound at residue Leu-587. Residues Cys-634 and Cys-655 are joined by a disulfide bond. Tyr-654 is a binding site for a protein. His-690 contacts Zn(2+). A disulfide bridge connects residues Cys-702 and Cys-713. Arg-706 provides a ligand contact to a protein. N-linked (GlcNAc...) asparagine glycosylation is present at Asn-765. An NHL 5 repeat occupies Gly-769–Thr-812. The residue at position 774 (Val-774) is a Sulfotyrosine. His-786 contributes to the Zn(2+) binding site. Asp-787 is a Ca(2+) binding site. Glu-792 carries the sulfotyrosine modification. The helical transmembrane segment at Val-867–Ile-890 threads the bilayer. Residues Arg-891–Ser-976 are Cytoplasmic-facing. Phosphoserine occurs at positions 921, 932, and 945. Residues Asn-928–Ser-945 are interaction with RASSF9. The disordered stretch occupies residues Gly-940–Ser-976. Residue Thr-946 is modified to Phosphothreonine. Phosphoserine is present on Ser-949. Residues Glu-952–Tyr-965 show a composition bias toward acidic residues. The residue at position 959 (Thr-959) is a Phosphothreonine. Residue Ser-961 is modified to Phosphoserine.

This sequence in the C-terminal section; belongs to the peptidyl-alpha-hydroxyglycine alpha-amidating lyase family. It in the N-terminal section; belongs to the copper type II ascorbate-dependent monooxygenase family. In terms of assembly, monomer. Interacts with RASSF9. It depends on Zn(2+) as a cofactor. Cu(2+) serves as cofactor.

The protein resides in the cytoplasmic vesicle. Its subcellular location is the secretory vesicle membrane. The protein localises to the membrane. It localises to the secreted. The catalysed reaction is a [peptide]-C-terminal glycine + 2 L-ascorbate + O2 = a [peptide]-C-terminal (2S)-2-hydroxyglycine + 2 monodehydro-L-ascorbate radical + H2O. It catalyses the reaction a [peptide]-C-terminal (2S)-2-hydroxyglycine = a [peptide]-C-terminal amide + glyoxylate. The enzyme catalyses N-dodecanoylglycine + 2 L-ascorbate + O2 = N-dodecanoyl-(2S)-hydroxyglycine + 2 monodehydro-L-ascorbate radical + H2O. It carries out the reaction N-dodecanoyl-(2S)-hydroxyglycine = dodecanamide + glyoxylate. The catalysed reaction is N-(9Z,12Z,15Z)-octadecatrienoylglycine + 2 L-ascorbate + O2 = N-(9Z,12Z,15Z)-octadecatrienoyl-(2S)-hydroxyglycine + 2 monodehydro-L-ascorbate radical + H2O. It catalyses the reaction N-(9Z,12Z,15Z)-octadecatrienoyl-(2S)-hydroxyglycine = (9Z,12Z,15Z)-octadecatrienamide + glyoxylate. The enzyme catalyses N-(9Z-octadecenoyl)glycine + 2 L-ascorbate + O2 = N-(9Z-octadecenoyl)-(2S)-hydroxyglycine + 2 monodehydro-L-ascorbate radical + H2O. It carries out the reaction N-(9Z-octadecenoyl)-(2S)-hydroxyglycine = (9Z)-octadecenamide + glyoxylate. The catalysed reaction is N-tetradecanoylglycine + 2 L-ascorbate + O2 = N-tetradecanoyl-(2S)-hydroxyglycine + 2 monodehydro-L-ascorbate radical + H2O. It catalyses the reaction N-tetradecanoyl-(2S)-hydroxyglycine = tetradecamide + glyoxylate. The enzyme catalyses N-decanoylglycine + 2 L-ascorbate + O2 = N-decanoyl-(2S)-hydroxyglycine + 2 monodehydro-L-ascorbate radical + H2O. It carries out the reaction N-decanoyl-(2S)-hydroxyglycine = decanamide + glyoxylate. The catalysed reaction is N-octanoylglycine + 2 L-ascorbate + O2 = N-octanoyl-(2S)-hydroxyglycine + 2 monodehydro-L-ascorbate radical + H2O. It catalyses the reaction N-octanoyl-(2S)-hydroxyglycine = octanamide + glyoxylate. With respect to regulation, PAM activity is inhibited by EDTA, phenylglyoxal and diethyl pyrocarbonate. PAL activity is stimulated by cadmium and inhibited by mercury. In terms of biological role, bifunctional enzyme that catalyzes amidation of the C-terminus of proteins. Alpha-amidation is present at the C-terminus of many endocrine hormones and neuropeptides and is required for their activity. C-terminal amidation also takes place in response to protein fragmentation triggered by oxidative stress, promoting degradation of amidated protein fragments by the proteasome. Alpha-amidation involves two sequential reactions, both of which are catalyzed by separate catalytic domains of the enzyme. The first step, catalyzed by peptidyl alpha-hydroxylating monooxygenase (PHM) domain, is the copper-, ascorbate-, and O2- dependent stereospecific hydroxylation (with S stereochemistry) at the alpha-carbon (C-alpha) of the C-terminal glycine of the peptidylglycine substrate. The second step, catalyzed by the peptidylglycine amidoglycolate lyase (PAL) domain, is the zinc-dependent cleavage of the N-C-alpha bond, producing the alpha-amidated peptide and glyoxylate. Similarly, catalyzes the two-step conversion of an N-fatty acylglycine to a primary fatty acid amide and glyoxylate. The protein is Peptidylglycine alpha-amidating monooxygenase of Rattus norvegicus (Rat).